We begin with the raw amino-acid sequence, 385 residues long: Putative transporter YthQ (385 aa).

The next 8 membrane-spanning stretches (helical) occupy residues 24–44, 67–87, 106–128, 133–155, 176–193, 197–214, 304–324, and 365–385; these read AVIDWTVALYIVLPAIAFVIY, WLYAVCVLIMFTGSIRTFLME, YALLYSFLATLAKWLLLFFIVLP, SVLITFAESTALLCYLFGLHIFF, TLVRAILFAGSAILIVFT, LLALFGILFLFFSVIRSL, AFTVLIFVSPIWLKVIALLVY, and ILHYAFAACCFLAAAVSLLFT.

The protein resides in the cell membrane. This Bacillus subtilis (strain 168) protein is Putative transporter YthQ (ythQ).